We begin with the raw amino-acid sequence, 423 residues long: Flotillin-1 (423 aa).

The protein belongs to the band 7/mec-2 family. Flotillin subfamily. Heterooligomeric complex of flotillin-1 and flotillin-2 and caveolin-1 and caveolin-2. As to expression, normally expressed in growing retinal exons of newly differentiated ganglion cells at the retinal margin. After optic nerve injury, expressed in all retinal ganglion cells and retinal axons. Also expressed in endothelial cells, spinal cord, larval and adult skin, muscle processes, thymus and gill macrophages.

The protein localises to the cell membrane. The protein resides in the endosome. Its subcellular location is the membrane. It localises to the caveola. It is found in the melanosome. The protein localises to the membrane raft. Its function is as follows. May act as a scaffolding protein within caveolar membranes, functionally participating in formation of caveolae or caveolae-like vesicles. This chain is Flotillin-1 (flot1), found in Carassius auratus (Goldfish).